The following is a 366-amino-acid chain: Actin-like protein 8 (366 aa).

It belongs to the actin family. As to expression, strongly expressed in testis and pancreas. Weak expression in placenta.

It localises to the cytoplasm. It is found in the cytoskeleton. This chain is Actin-like protein 8 (ACTL8), found in Homo sapiens (Human).